Here is a 248-residue protein sequence, read N- to C-terminus: Glutathione S-transferase omega-2 (248 aa).

The GST N-terminal domain maps to 22–101 (GVIRIYSMRF…YLDDVYPGRK (80 aa)). The active-site Nucleophile is the Cys-32. Residues Lys-59, Ile-72, and 85–86 (ES) each bind glutathione. One can recognise a GST C-terminal domain in the interval 106–231 (DPYERARQKM…VFLGFLNLYF (126 aa)).

Belongs to the GST superfamily. Omega family.

The enzyme catalyses RX + glutathione = an S-substituted glutathione + a halide anion + H(+). It carries out the reaction L-dehydroascorbate + 2 glutathione = glutathione disulfide + L-ascorbate. The catalysed reaction is methylarsonate + 2 glutathione + H(+) = methylarsonous acid + glutathione disulfide + H2O. Exhibits glutathione-dependent thiol transferase activity. Has high dehydroascorbate reductase activity and may contribute to the recycling of ascorbic acid. Participates in the biotransformation of inorganic arsenic and reduces monomethylarsonic acid (MMA). In Mus musculus (Mouse), this protein is Glutathione S-transferase omega-2 (Gsto2).